An 888-amino-acid polypeptide reads, in one-letter code: Aconitate hydratase A (888 aa).

Residues C433, C499, and C502 each coordinate [4Fe-4S] cluster.

Belongs to the aconitase/IPM isomerase family. In terms of assembly, monomer. Requires [4Fe-4S] cluster as cofactor.

It catalyses the reaction citrate = D-threo-isocitrate. It carries out the reaction (2S,3R)-3-hydroxybutane-1,2,3-tricarboxylate = 2-methyl-cis-aconitate + H2O. Its pathway is carbohydrate metabolism; tricarboxylic acid cycle; isocitrate from oxaloacetate: step 2/2. It functions in the pathway organic acid metabolism; propanoate degradation. Involved in the catabolism of short chain fatty acids (SCFA) via the tricarboxylic acid (TCA)(acetyl degradation route) and probably the 2-methylcitrate cycle I (propionate degradation route). Catalyzes the reversible isomerization of citrate to isocitrate via cis-aconitate. Could catalyze the hydration of 2-methyl-cis-aconitate to yield (2R,3S)-2-methylisocitrate. The apo form of AcnA functions as a RNA-binding regulatory protein. This chain is Aconitate hydratase A (acn), found in Streptococcus mutans serotype c (strain ATCC 700610 / UA159).